The sequence spans 144 residues: Large ribosomal subunit protein uL15 (144 aa).

The interval 1–52 (MRLNTLSPAAGSKPSKKRVGRGIGSGLGKTGGRGHKGQKSRSGGKVRAGFEG) is disordered. A compositionally biased stretch (gly residues) spans 21-31 (RGIGSGLGKTG). Over residues 32–44 (GRGHKGQKSRSGG) the composition is skewed to basic residues.

It belongs to the universal ribosomal protein uL15 family. In terms of assembly, part of the 50S ribosomal subunit.

In terms of biological role, binds to the 23S rRNA. This Aliivibrio fischeri (strain ATCC 700601 / ES114) (Vibrio fischeri) protein is Large ribosomal subunit protein uL15.